Here is a 176-residue protein sequence, read N- to C-terminus: Small ribosomal subunit protein uS5 (176 aa).

The region spanning 11–74 is the S5 DRBM domain; it reads LSEVLVDVNR…QAAKKRMMKV (64 aa).

This sequence belongs to the universal ribosomal protein uS5 family. As to quaternary structure, part of the 30S ribosomal subunit. Contacts proteins S4 and S8.

With S4 and S12 plays an important role in translational accuracy. Functionally, located at the back of the 30S subunit body where it stabilizes the conformation of the head with respect to the body. The protein is Small ribosomal subunit protein uS5 of Rickettsia akari (strain Hartford).